The sequence spans 244 residues: Na(+)-translocating NADH-quinone reductase subunit E (244 aa).

A run of 6 helical transmembrane segments spans residues 11–31 (LLGI…TFLG), 50–70 (MSVA…HYFI), 90–110 (FLEL…LEVL), 123–143 (GIFL…LFGI), 153–173 (VVFS…FATI), and 191–211 (ISFI…GIDI). The span at 222–236 (VTNIATDSPQPNTHS) shows a compositional bias: polar residues. The disordered stretch occupies residues 222–244 (VTNIATDSPQPNTHSSSEEPKAS).

The protein belongs to the NqrDE/RnfAE family. In terms of assembly, composed of six subunits; NqrA, NqrB, NqrC, NqrD, NqrE and NqrF.

The protein resides in the cell inner membrane. It carries out the reaction a ubiquinone + n Na(+)(in) + NADH + H(+) = a ubiquinol + n Na(+)(out) + NAD(+). Its function is as follows. NQR complex catalyzes the reduction of ubiquinone-1 to ubiquinol by two successive reactions, coupled with the transport of Na(+) ions from the cytoplasm to the periplasm. NqrA to NqrE are probably involved in the second step, the conversion of ubisemiquinone to ubiquinol. This is Na(+)-translocating NADH-quinone reductase subunit E from Chlamydia trachomatis serovar A (strain ATCC VR-571B / DSM 19440 / HAR-13).